Here is a 641-residue protein sequence, read N- to C-terminus: Epithelial sodium channel subunit beta (641 aa).

The Cytoplasmic portion of the chain corresponds to 1–50 (MHLKKYLLKGLHRLQKGPGYSYKELLVWYCNNTNTHGPKRIICEGPKKKA). Residues 51 to 71 (MWFLITLLFTSLVCWQWGVFI) traverse the membrane as a helical segment. The Extracellular portion of the chain corresponds to 72-533 (RTYLSWEVSV…GGQFGFWMGG (462 aa)). Disulfide bonds link C98–C273, C185–C190, C197–C204, C250–C257, C362–C449, C387–C445, C391–C441, C400–C427, and C402–C416. The N-linked (GlcNAc...) asparagine glycan is linked to N141. N-linked (GlcNAc...) asparagine glycosylation occurs at N261. The chain crosses the membrane as a helical span at residues 534-554 (SVLCLIEFGEILIDFVWITII). The Cytoplasmic portion of the chain corresponds to 555 to 641 (KLVAFAKSLR…IESDSEGDAI (87 aa)). The segment at 593 to 624 (PDVARPGPDPGTYPDEQTLPIPGTPPPNYDSL) is disordered. A PY motif; recruits WW domain-containing proteins and is thereby required for ubiquitination and inhibition of the channel by NEDD4 and NEDD4L motif is present at residues 617-621 (PPPNY). Phosphoserine occurs at positions 634 and 636.

This sequence belongs to the amiloride-sensitive sodium channel (TC 1.A.6) family. SCNN1B subfamily. As to quaternary structure, component of the heterotrimeric epithelial sodium channel (ENaC) composed of an alpha/SCNN1A, a beta/SCNN1B and a gamma/SCNN1G subunit. An additional delta/SCNN1D subunit can replace the alpha/SCNN1A subunit to form an alternative channel with specific properties. Interacts with WWP1 (via WW domains). Interacts with WWP2 (via WW domains); inhibits the channel. Interacts with the full-length immature form of PCSK9 (pro-PCSK9). Interacts (N-glycosylated) with BPIFA1; the interaction is direct and inhibits the proteolytic processing of SCNN1A and SCNN1G and the activation of ENaC. Post-translationally, ubiquitinated. Can be ubiquitinated at multiple sites and undergo monoubiquitination and polyubiquitination. Ubiquitination by NEDD4 or NEDD4L inhibits the ENaC channel through endocytosis, intracellular retention and degradation of its individual subunits. However, some studies could not confirm the ubiquitination of this subunit of the ENaC. In terms of processing, phosphorylated on serine and threonine residues. Aldosterone and insulin increase the basal level of phosphorylation. N-glycosylated. N-glycosylation is required for interaction with BPIFA1.

The protein localises to the apical cell membrane. Its subcellular location is the cytoplasmic vesicle membrane. The enzyme catalyses Na(+)(in) = Na(+)(out). With respect to regulation, originally identified and characterized by its inhibition by the diuretic drug amiloride. Its function is as follows. This is one of the three pore-forming subunits of the heterotrimeric epithelial sodium channel (ENaC), a critical regulator of sodium balance and fluid homeostasis. ENaC operates in epithelial tissues, where it mediates the electrodiffusion of sodium ions from extracellular fluid through the apical membrane of cells, with water following osmotically. It plays a key role in maintaining sodium homeostasis through electrogenic sodium reabsorption in the kidneys. Additionally, ENaC is essential for airway surface liquid homeostasis, which is crucial for proper mucus clearance. This Canis lupus familiaris (Dog) protein is Epithelial sodium channel subunit beta.